The primary structure comprises 585 residues: Clathrin heavy chain linker domain-containing protein 1 (585 aa).

Residues 118-239 (QLEAKMRIID…DLRFRHQRLQ (122 aa)) adopt a coiled-coil conformation.

The polypeptide is Clathrin heavy chain linker domain-containing protein 1 (Clhc1) (Rattus norvegicus (Rat)).